The chain runs to 275 residues: MSTNPATNSESLDILGRYVSAGPGFSPGVRALLFKLLGGKTLNTLTPEELRFSHLVVSKMYELGLNVFLLREAVANCGVTDAVILERKVPVEFWKILFDGCVALGVKEDMLLSEAGRSQLWLHLNKNPQLLKGLAGYVLRRLGLCQHVKVHPQNLLDGNFLFNLGSVFSCRLLMVAAFCLLFWGRPEVEPWVRTFVTKIYVLYLIIVGALRINFSVFELSTQNGYCGILEAICSDLMAVAGHGGEGSRERQWHAWLDYLFIFNNNVVLHNSNRDG.

It belongs to the herpesviridae UL79 family.

This chain is Gene 18 protein (18), found in Connochaetes taurinus (Blue wildebeest).